A 903-amino-acid chain; its full sequence is Protein translocase subunit SecA (903 aa).

ATP is bound by residues Gln-89, 107 to 111 (GEGKT), and Asp-502. 4 residues coordinate Zn(2+): Cys-887, Cys-889, Cys-898, and His-899.

This sequence belongs to the SecA family. Monomer and homodimer. Part of the essential Sec protein translocation apparatus which comprises SecA, SecYEG and auxiliary proteins SecDF-YajC and YidC. Requires Zn(2+) as cofactor.

It is found in the cell inner membrane. The protein resides in the cytoplasm. It carries out the reaction ATP + H2O + cellular proteinSide 1 = ADP + phosphate + cellular proteinSide 2.. Its function is as follows. Part of the Sec protein translocase complex. Interacts with the SecYEG preprotein conducting channel. Has a central role in coupling the hydrolysis of ATP to the transfer of proteins into and across the cell membrane, serving both as a receptor for the preprotein-SecB complex and as an ATP-driven molecular motor driving the stepwise translocation of polypeptide chains across the membrane. The polypeptide is Protein translocase subunit SecA (Jannaschia sp. (strain CCS1)).